Reading from the N-terminus, the 331-residue chain is UPF0194 membrane protein YbhG (331 aa).

An N-terminal signal peptide occupies residues 1 to 19; sequence MKKPVVIGLAIAAIVAVIA. The stretch at 107–208 forms a coiled coil; it reads EEIAQAAAAV…LDLQDTTLIA (102 aa).

This sequence belongs to the UPF0194 family.

The protein localises to the periplasm. The chain is UPF0194 membrane protein YbhG from Salmonella paratyphi A (strain ATCC 9150 / SARB42).